A 1378-amino-acid chain; its full sequence is Hybrid signal transduction histidine kinase H (1378 aa).

The stretch at 212–242 (KEKFKKEELINDFKSRLETLENKIDQRVDER) forms a coiled coil. In terms of domain architecture, PAS spans 243–314 (IETRFKYVLE…NNNNNNNNNN (72 aa)). A disordered region spans residues 294–337 (YQQHNNNNNNNNNNNNNNNNNNNNNSNNKSPIINSPNTTSPTNT). A compositionally biased stretch (low complexity) spans 298-337 (NNNNNNNNNNNNNNNNNNNNNSNNKSPIINSPNTTSPTNT). One can recognise a Histidine kinase domain in the interval 498–805 (TMSHEMRTPL…SFHFLVEVFF (308 aa)). His501 is subject to Phosphohistidine; by autocatalysis. A compositionally biased stretch (low complexity) spans 663–696 (NNSNNSNNNHNHNNNNNNNNHLNCSGSFNNNGFN). Disordered stretches follow at residues 663 to 717 (NNSN…DKHC), 905 to 924 (TNNN…STTT), and 1103 to 1213 (NNSN…HPNP). The segment covering 697 to 714 (HGHHHHHHHHHHHHHHHD) has biased composition (basic residues). 2 stretches are compositionally biased toward low complexity: residues 1103–1119 (NNSN…SGSS) and 1136–1187 (SPSL…NNNN). Over residues 1188–1206 (LNHYNSDSILSSDLSPQQH) the composition is skewed to polar residues. The Response regulatory domain occupies 1244-1364 (KIMVAEDSLV…ILAVELKRAW (121 aa)). Asp1297 carries the 4-aspartylphosphate modification.

Activation probably requires transfer of a phosphate group between a histidine in the kinase core (transmitter) domain and an aspartate of the receiver domain.

The enzyme catalyses ATP + protein L-histidine = ADP + protein N-phospho-L-histidine.. Acts as a receptor histidine kinase for a signal transduction pathway. This protein undergoes an ATP-dependent autophosphorylation at a conserved histidine residue in the kinase core, and a phosphoryl group is then transferred to a conserved aspartate residue in the receiver domain. This is Hybrid signal transduction histidine kinase H (dhkH) from Dictyostelium discoideum (Social amoeba).